Here is a 122-residue protein sequence, read N- to C-terminus: Large ribosomal subunit protein uL14 (122 aa).

This sequence belongs to the universal ribosomal protein uL14 family. As to quaternary structure, part of the 50S ribosomal subunit. Forms a cluster with proteins L3 and L19. In the 70S ribosome, L14 and L19 interact and together make contacts with the 16S rRNA in bridges B5 and B8.

Binds to 23S rRNA. Forms part of two intersubunit bridges in the 70S ribosome. This is Large ribosomal subunit protein uL14 from Mycobacteroides abscessus (strain ATCC 19977 / DSM 44196 / CCUG 20993 / CIP 104536 / JCM 13569 / NCTC 13031 / TMC 1543 / L948) (Mycobacterium abscessus).